The sequence spans 63 residues: Large ribosomal subunit protein bL32 (63 aa).

Positions 1–45 (MAVQQNKKSRSRRDMRRSHDALTKPTLSVDPTTGETHLRHHMTPD) are disordered. Residues 7–16 (KKSRSRRDMR) are compositionally biased toward basic residues. The segment covering 25–35 (PTLSVDPTTGE) has biased composition (polar residues).

The protein belongs to the bacterial ribosomal protein bL32 family.

The sequence is that of Large ribosomal subunit protein bL32 from Legionella pneumophila (strain Paris).